Here is a 369-residue protein sequence, read N- to C-terminus: MKIGVFCPIGNNGWLLSENAPQYMPSFELNKKIVQRAEHYGFDFALSMIKLRGFGGKTEFWDHNLETFTLMAGLAAVTSKIKIYATAATLVMPPAIVARMASTIDSISNGRFGLNVVTGWQAPEYSQMGMWPGDEYFAKRYEYLSEYVQILRELWATGQSDFKGEHFQMEDCRVSPQPQAEMKIICAGQSDTGLEFSAQHADYNFVFGKGLNTPTAYAGINDRLKHFTDQTGRDVQTYVLFMVIAAETDAEAMAKWQSYNDGADVEAINWLMNQGGKDTKSGADTNIRQMASSVSPVNINMGTLVGSYEKVAAMLDEIAEIKGTEGILLTFDDFVQGVEDFGERIQPLMTSRQDIVAEYQPVTPLEKSA.

FMN-binding positions include 49–50, Asn115, Glu124, 140–141, and Ser190; these read IK and RY.

It belongs to the NtaA/SnaA/DszA monooxygenase family. RutA subfamily.

The catalysed reaction is uracil + FMNH2 + NADH + O2 = (Z)-3-ureidoacrylate + FMN + NAD(+) + H2O + H(+). It carries out the reaction thymine + FMNH2 + NADH + O2 = (Z)-2-methylureidoacrylate + FMN + NAD(+) + H2O + H(+). Its function is as follows. Catalyzes the pyrimidine ring opening between N-3 and C-4 by an unusual flavin hydroperoxide-catalyzed mechanism, adding oxygen atoms in the process to yield ureidoacrylate peracid, that immediately reacts with FMN forming ureidoacrylate and FMN-N(5)-oxide. The FMN-N(5)-oxide reacts spontaneously with NADH to produce FMN. Requires the flavin reductase RutF to regenerate FMN in vivo. In Acinetobacter baylyi (strain ATCC 33305 / BD413 / ADP1), this protein is Pyrimidine monooxygenase RutA.